A 190-amino-acid chain; its full sequence is High affinity copper uptake protein 1 (190 aa).

The tract at residues 1–35 (MDHSHHMGMSYMDSNSTMQPSHHHPTTSASHSHGG) is disordered. Residues 1–61 (MDHSHHMGMS…KNVELLFSGL (61 aa)) lie on the Extracellular side of the membrane. Positions 5–6 (HH) match the Bis-His motif motif. A Methionine segments (Mets) motif motif is present at residues 7–12 (MGMSYM). An N-linked (GlcNAc...) asparagine glycan is attached at N15. A compositionally biased stretch (low complexity) spans 26 to 35 (TTSASHSHGG). Residue T27 is glycosylated (O-linked (GalNAc...) threonine). The chain crosses the membrane as a helical span at residues 62–82 (VINTAGEMAGAFVAVFLLAMF). Topologically, residues 83 to 132 (YEGLKIARESLLRKSQVSIRYNSMPVPGPNGTILMETHKTVGQQMLSFPH) are cytoplasmic. T114 is modified (phosphothreonine). A helical transmembrane segment spans residues 133-153 (LLQTVLHIIQVVISYFLMLIF). Over 154-156 (MTY) the chain is Extracellular. The helical transmembrane segment at 157–177 (NGYLCIAVAAGAGTGYFLFSW) threads the bilayer. Residues 178–190 (KKAVVVDITEHCH) are Cytoplasmic-facing. C189 carries the post-translational modification Cysteine sulfenic acid (-SOH).

This sequence belongs to the copper transporter (Ctr) (TC 1.A.56) family. SLC31A subfamily. In terms of assembly, homotrimer; is stabilized by cisplatin via interactions between cisplatin and the methionine-rich clusters, and could be crucial for the copper(2+) reduction process and copper(1+) stabilization. Heterotrimer between SLC31A1, CCS and SOD1; this heterotrimer is copper(1+)-mediated and its maintenance is regulated through SOD1 activation. Interacts with KDR; this interaction is induced upon VEGFA stimulation leading to SLC31A1 and KDR subsequent co-internalization to early endosomes, thereby activating KDR downstream signaling in endothelial cells. Interacts (via C-terminal domain) with ATOX1 (via dimer form); this interaction improves ATOX1 stability and controls intracellular copper(1+) levels. Interacts with SLC31A2; this interaction stabilizes SLC31A2 and protects its from ubiquitination and degradation. Interacts (via C-terminal domain) with CCS; this interaction is copper(1+)-mediated. O-Glycosylation at Thr-27 protects from proteolytic cleavage in the N-terminal extracellular domain. In terms of processing, proteolytic cleavage, leading to a truncated form, is facilitated by SLC31A2 and initiated preferentially by CTSL and to a minor extend by CTSB in endolysosomal compartments. In vitro, is cleaved by CTSL/cathepsin L between residues 8 and 9 from the amino terminus. A post-CTSL/cathepsin L processing occurs to yield to the fully truncated form. Post-translationally, sulfenylated at Cys-189 after stimulation with VEGFA, which induces SLC31A1-KDR disulfide bond formation and their co-internalization to early endosomes, driving to a sustained VEGFR2 signaling.

The protein resides in the cell membrane. It is found in the early endosome membrane. It localises to the recycling endosome membrane. Its subcellular location is the apical cell membrane. The protein localises to the late endosome membrane. The protein resides in the basolateral cell membrane. The enzyme catalyses Ag(+)(out) = Ag(+)(in). It carries out the reaction Cu(+)(out) = Cu(+)(in). With respect to regulation, copper(1+) transport is stimulated by extracellular acidic pH and high potassium ions concentrations. Copper(1+) import is regulated by a copper(1+)-dependent recycling of SLC31A1. Uniporter that mediates the transport of copper(1+) from the extracellular space to the cytoplasm, across the plasma membrane and delivers directly copper(1+) to specific chaperone such as ATOX1, via a copper(1+)- mediated transient interaction between the C-terminal domain and a copper(1+) chaperone, thus controlling intracellular copper(1+) levels. May function in copper(1+) import from the apical membrane thus may drive intestinal copper absorption. The copper(1+) transport mechanism is sodium-independent, saturable and of high-affinity. Also mediates the uptake of silver(1+). May function in the influx of the platinum-containing chemotherapeutic agents. The platinum-containing chemotherapeutic agents uptake is saturable. In vitro, mediates the transport of cadmium(2+) into cells. Also participates in the first step of copper(2+) acquisition by cells through a direct transfer of copper(2+) from copper(2+) carriers in blood, such as ALB to the N-terminal domain of SLC31A1, leading to copper(2+) reduction and probably followed by copper(1+) stabilization. In addition, functions as a redox sensor to promote angiogenesis in endothelial cells, in a copper(1+) transport independent manner, by transmitting the VEGF-induced ROS signal through a sulfenylation at Cys-189 leadin g to a subsequent disulfide bond formation between SLC31A1 and KDR. The SLC31A1-KDR complex is then co-internalized to early endosomes, driving a sustained VEGFR2 signaling. In terms of biological role, mobilizes copper(1+) out of the endosomal compartment, making copper(1+) available for export out of the cells. The chain is High affinity copper uptake protein 1 from Homo sapiens (Human).